The primary structure comprises 278 residues: Bis(5'-nucleosyl)-tetraphosphatase, symmetrical (278 aa).

Belongs to the Ap4A hydrolase family.

It catalyses the reaction P(1),P(4)-bis(5'-adenosyl) tetraphosphate + H2O = 2 ADP + 2 H(+). Its function is as follows. Hydrolyzes diadenosine 5',5'''-P1,P4-tetraphosphate to yield ADP. This is Bis(5'-nucleosyl)-tetraphosphatase, symmetrical from Buchnera aphidicola subsp. Baizongia pistaciae (strain Bp).